A 177-amino-acid polypeptide reads, in one-letter code: Ubiquinol-cytochrome c reductase iron-sulfur subunit (177 aa).

A helical membrane pass occupies residues 18-38; that stretch reads MVLTASSVAAVGAVCTLWPLV. The region spanning 88-175 is the Rieske domain; the sequence is ARAVKMSELI…YTFISDKKIR (88 aa). [2Fe-2S] cluster contacts are provided by Cys120, His122, Cys139, and His142. Cys125 and Cys141 are joined by a disulfide.

This sequence belongs to the Rieske iron-sulfur protein family. As to quaternary structure, the main subunits of complex b-c1 are: cytochrome b, cytochrome c1 and the Rieske protein. It depends on [2Fe-2S] cluster as a cofactor.

The protein localises to the cell membrane. The catalysed reaction is a quinol + 2 Fe(III)-[cytochrome c](out) = a quinone + 2 Fe(II)-[cytochrome c](out) + 2 H(+)(out). Component of the ubiquinol-cytochrome c reductase complex (complex III or cytochrome b-c1 complex), which is a respiratory chain that generates an electrochemical potential coupled to ATP synthesis. This chain is Ubiquinol-cytochrome c reductase iron-sulfur subunit (petA), found in Rickettsia felis (strain ATCC VR-1525 / URRWXCal2) (Rickettsia azadi).